Here is a 360-residue protein sequence, read N- to C-terminus: Photosystem II protein D1 (360 aa).

Helical transmembrane passes span 29 to 46 (YIGW…TATS), 118 to 133 (HFLL…EWEF), and 142 to 156 (WISV…AASA). A chlorophyll a-binding site is contributed by H118. Y126 provides a ligand contact to pheophytin a. [CaMn4O5] cluster contacts are provided by D170 and E189. Residues 197-218 (LHQLGVAGVFGGSLFSAMHGSL) traverse the membrane as a helical segment. Residue H198 participates in chlorophyll a binding. Residues H215 and 264–265 (SF) each bind a quinone. Residue H215 coordinates Fe cation. Residue H272 coordinates Fe cation. A helical transmembrane segment spans residues 274 to 288 (FLGLWPVVGIWFTSM). H332, E333, D342, and A344 together coordinate [CaMn4O5] cluster. Residues 345 to 360 (SNESLPLALVAPAING) constitute a propeptide that is removed on maturation.

Belongs to the reaction center PufL/M/PsbA/D family. As to quaternary structure, PSII is composed of 1 copy each of membrane proteins PsbA, PsbB, PsbC, PsbD, PsbE, PsbF, PsbH, PsbI, PsbJ, PsbK, PsbL, PsbM, PsbT, PsbX, PsbY, PsbZ, Psb30/Ycf12, at least 3 peripheral proteins of the oxygen-evolving complex and a large number of cofactors. It forms dimeric complexes. The D1/D2 heterodimer binds P680, chlorophylls that are the primary electron donor of PSII, and subsequent electron acceptors. It shares a non-heme iron and each subunit binds pheophytin, quinone, additional chlorophylls, carotenoids and lipids. D1 provides most of the ligands for the Mn4-Ca-O5 cluster of the oxygen-evolving complex (OEC). There is also a Cl(-1) ion associated with D1 and D2, which is required for oxygen evolution. The PSII complex binds additional chlorophylls, carotenoids and specific lipids. serves as cofactor. In terms of processing, tyr-161 forms a radical intermediate that is referred to as redox-active TyrZ, YZ or Y-Z. Post-translationally, C-terminally processed by CTPA; processing is essential to allow assembly of the oxygen-evolving complex and thus photosynthetic growth.

It is found in the plastid. The protein localises to the chloroplast thylakoid membrane. It catalyses the reaction 2 a plastoquinone + 4 hnu + 2 H2O = 2 a plastoquinol + O2. Photosystem II (PSII) is a light-driven water:plastoquinone oxidoreductase that uses light energy to abstract electrons from H(2)O, generating O(2) and a proton gradient subsequently used for ATP formation. It consists of a core antenna complex that captures photons, and an electron transfer chain that converts photonic excitation into a charge separation. The D1/D2 (PsbA/PsbD) reaction center heterodimer binds P680, the primary electron donor of PSII as well as several subsequent electron acceptors. This chain is Photosystem II protein D1, found in Antithamnion sp. (Red alga).